A 162-amino-acid polypeptide reads, in one-letter code: Phosphopantetheine adenylyltransferase (162 aa).

Thr-14 is a substrate binding site. ATP-binding positions include 14–15 (TF) and His-22. 3 residues coordinate substrate: Lys-46, Leu-78, and Arg-92. Residues 93 to 95 (GLR), Glu-103, and 128 to 134 (HSFISSS) each bind ATP.

It belongs to the bacterial CoaD family. As to quaternary structure, homohexamer. Mg(2+) serves as cofactor.

It localises to the cytoplasm. It carries out the reaction (R)-4'-phosphopantetheine + ATP + H(+) = 3'-dephospho-CoA + diphosphate. Its pathway is cofactor biosynthesis; coenzyme A biosynthesis; CoA from (R)-pantothenate: step 4/5. In terms of biological role, reversibly transfers an adenylyl group from ATP to 4'-phosphopantetheine, yielding dephospho-CoA (dPCoA) and pyrophosphate. In Xylella fastidiosa (strain 9a5c), this protein is Phosphopantetheine adenylyltransferase.